Here is a 268-residue protein sequence, read N- to C-terminus: 4-hydroxy-tetrahydrodipicolinate reductase (268 aa).

NAD(+)-binding positions include 7–12 (GAGGRM) and glutamate 33. Residue arginine 34 coordinates NADP(+). NAD(+)-binding positions include 97–99 (GTT) and 121–124 (SGNM). Catalysis depends on histidine 155, which acts as the Proton donor/acceptor. Histidine 156 lines the (S)-2,3,4,5-tetrahydrodipicolinate pocket. Catalysis depends on lysine 159, which acts as the Proton donor. 165-166 (GT) contacts (S)-2,3,4,5-tetrahydrodipicolinate.

It belongs to the DapB family.

It is found in the cytoplasm. The enzyme catalyses (S)-2,3,4,5-tetrahydrodipicolinate + NAD(+) + H2O = (2S,4S)-4-hydroxy-2,3,4,5-tetrahydrodipicolinate + NADH + H(+). It catalyses the reaction (S)-2,3,4,5-tetrahydrodipicolinate + NADP(+) + H2O = (2S,4S)-4-hydroxy-2,3,4,5-tetrahydrodipicolinate + NADPH + H(+). It participates in amino-acid biosynthesis; L-lysine biosynthesis via DAP pathway; (S)-tetrahydrodipicolinate from L-aspartate: step 4/4. Its function is as follows. Catalyzes the conversion of 4-hydroxy-tetrahydrodipicolinate (HTPA) to tetrahydrodipicolinate. The chain is 4-hydroxy-tetrahydrodipicolinate reductase from Brucella melitensis biotype 1 (strain ATCC 23456 / CCUG 17765 / NCTC 10094 / 16M).